We begin with the raw amino-acid sequence, 1173 residues long: Protein GIGANTEA (1173 aa).

Disordered stretches follow at residues 150–187 (EQQNGDTERNCLSKATTSGSPTSEPKAGSPTQHERKPL), 604–641 (SGSKRPRSEYASTTENIEANQPVSNNQTANRKSRNVKG), and 840–863 (SRTEMNPRGNHKYARHSDEGSGRP). 2 stretches are compositionally biased toward polar residues: residues 162 to 172 (SKATTSGSPTS) and 613 to 633 (YASTTENIEANQPVSNNQTAN). The segment covering 854–863 (RHSDEGSGRP) has biased composition (basic and acidic residues).

It belongs to the GIGANTEA family. As to quaternary structure, interacts with SPY. Interacts with ADO1 (via N-terminus) and ADO2. Interacts with ADO3 (via N-terminus). Interacts (via N-terminus) with CDF1. Interacts (via N-terminus) with TCP4. Widely expressed with highest levels in inflorescence apices, young flowers and young siliques.

Its subcellular location is the nucleus. It is found in the cytoplasm. Functionally, involved in regulation of circadian rhythm and photoperiodic flowering. May play a role in maintenance of circadian amplitude and period length. Is involved in phytochrome B signaling. Stabilizes ADO3 and the circadian photoreceptor ADO1/ZTL. Regulates 'CONSTANS' (CO) in the long-day flowering pathway by modulating the ADO3-dependent protein stability of CDF1 and CDF2, but is not essential to activate CO transcription. Regulates, via the microRNA miR172, a CO-independent pathway that promotes photoperiodic flowering by inducing 'FLOWERING LOCUS T'. The chain is Protein GIGANTEA (GI) from Arabidopsis thaliana (Mouse-ear cress).